Here is a 370-residue protein sequence, read N- to C-terminus: 3-isopropylmalate dehydrogenase (370 aa).

77–90 (GAKWDGVPYEARPE) contributes to the NAD(+) binding site. Substrate-binding residues include Arg-97, Arg-107, Arg-135, and Asp-226. 3 residues coordinate Mg(2+): Asp-226, Asp-250, and Asp-254. 290 to 302 (GSAPDIAGKGLAN) is a binding site for NAD(+).

Belongs to the isocitrate and isopropylmalate dehydrogenases family. LeuB type 1 subfamily. In terms of assembly, homodimer. Mg(2+) is required as a cofactor. It depends on Mn(2+) as a cofactor.

The protein localises to the cytoplasm. It carries out the reaction (2R,3S)-3-isopropylmalate + NAD(+) = 4-methyl-2-oxopentanoate + CO2 + NADH. It participates in amino-acid biosynthesis; L-leucine biosynthesis; L-leucine from 3-methyl-2-oxobutanoate: step 3/4. In terms of biological role, catalyzes the oxidation of 3-carboxy-2-hydroxy-4-methylpentanoate (3-isopropylmalate) to 3-carboxy-4-methyl-2-oxopentanoate. The product decarboxylates to 4-methyl-2 oxopentanoate. The chain is 3-isopropylmalate dehydrogenase from Rhodopseudomonas palustris (strain BisB18).